Reading from the N-terminus, the 933-residue chain is Phosphoenolpyruvate carboxylase (933 aa).

Residues H164 and K595 contribute to the active site.

It belongs to the PEPCase type 1 family. Mg(2+) is required as a cofactor.

It catalyses the reaction oxaloacetate + phosphate = phosphoenolpyruvate + hydrogencarbonate. Its function is as follows. Forms oxaloacetate, a four-carbon dicarboxylic acid source for the tricarboxylic acid cycle. This Rhodopseudomonas palustris (strain HaA2) protein is Phosphoenolpyruvate carboxylase.